Consider the following 108-residue polypeptide: Ig kappa chain V region GOM (108 aa).

The tract at residues 1 to 23 (DIVMTQTPLSLSVSPGEPASISC) is framework-1. A disulfide bond links Cys-23 and Cys-88. The complementarity-determining-1 stretch occupies residues 24–34 (RSSQSNLDYLN). Residues 35-49 (WYLQKAGQSPRLLPE) form a framework-2 region. Positions 44-66 (PRLLPEQDSQRASGVPDRFSGSG) are disordered. The complementarity-determining-2 stretch occupies residues 50-56 (QDSQRAS). The framework-3 stretch occupies residues 57–88 (GVPDRFSGSGSGTDFTLRIGRVEAEDAGIYYC). Residues 89–97 (MQRSFYPYT) are complementarity-determining-3. The interval 98–107 (FGQGTRLEVR) is framework-4.

The protein is Ig kappa chain V region GOM of Canis lupus familiaris (Dog).